The following is a 235-amino-acid chain: Fibrillarin-like rRNA/tRNA 2'-O-methyltransferase (235 aa).

S-adenosyl-L-methionine-binding positions include 91 to 92 (TT), 110 to 111 (EF), 137 to 138 (DA), and 157 to 160 (DVAQ).

It belongs to the methyltransferase superfamily. Fibrillarin family. As to quaternary structure, interacts with nop5. Component of box C/D small ribonucleoprotein (sRNP) particles that contain rpl7ae, FlpA and nop5, plus a guide RNA.

Involved in pre-rRNA and tRNA processing. Utilizes the methyl donor S-adenosyl-L-methionine to catalyze the site-specific 2'-hydroxyl methylation of ribose moieties in rRNA and tRNA. Site specificity is provided by a guide RNA that base pairs with the substrate. Methylation occurs at a characteristic distance from the sequence involved in base pairing with the guide RNA. The chain is Fibrillarin-like rRNA/tRNA 2'-O-methyltransferase from Pyrobaculum neutrophilum (strain DSM 2338 / JCM 9278 / NBRC 100436 / V24Sta) (Thermoproteus neutrophilus).